The chain runs to 123 residues: Histone H2B (123 aa).

The segment at Met1–Arg32 is disordered. Over residues Gly9–Arg32 the composition is skewed to basic residues. Ser110 is a glycosylation site (O-linked (GlcNAc) serine). Lys118 participates in a covalent cross-link: Glycyl lysine isopeptide (Lys-Gly) (interchain with G-Cter in ubiquitin).

Belongs to the histone H2B family. In terms of assembly, the nucleosome is a histone octamer containing two molecules each of H2A, H2B, H3 and H4 assembled in one H3-H4 heterotetramer and two H2A-H2B heterodimers. The octamer wraps approximately 147 bp of DNA. Monoubiquitination of Lys-118 gives a specific tag for epigenetic transcriptional activation and is also prerequisite for histone H3 'Lys-4' and 'Lys-79' methylation.

The protein localises to the nucleus. Its subcellular location is the chromosome. In terms of biological role, core component of nucleosome. Nucleosomes wrap and compact DNA into chromatin, limiting DNA accessibility to the cellular machineries which require DNA as a template. Histones thereby play a central role in transcription regulation, DNA repair, DNA replication and chromosomal stability. DNA accessibility is regulated via a complex set of post-translational modifications of histones, also called histone code, and nucleosome remodeling. The chain is Histone H2B from Urechis caupo (Innkeeper worm).